Consider the following 339-residue polypeptide: MDHEADAYRTDLMTITRYVLNEQSRNPEARGDLTILLSHIVLGCKFVASAVNKAGLAKLIGLAGETNVQGEEQKKLDVLSNEVFVKALVSSGRTCVLVSEEDEEATFVDPALRGKYCVCFDPLDGSSNIDCGVSIGTIFGIYMIKDKENVTLEDVLQPGKNMVAAGYCMYGSSCTLVLSTGNGVNGFTLDPSLGEFILTHPDIKIPKKGKIYSVNEGNAKNWDEPTAKFVEKCKFPKDGSSPKSLRYIGSMVADVHRTLLYGGVFLYPADKKSPNGKLRVLYEVFPMSFLMEQAGGQSFTGKERALDLVPTKIHERSPIFLGSFEDVEEIKGLYAAQAK.

Residues Glu-71, Glu-100, Asp-121, Leu-123, and Asp-124 each coordinate Mg(2+). Substrate contacts are provided by residues 124–127, Asn-215, Tyr-247, Tyr-267, and Lys-277; that span reads DGSS. Glu-283 provides a ligand contact to Mg(2+).

The protein belongs to the FBPase class 1 family. It depends on Mg(2+) as a cofactor.

It localises to the cytoplasm. It carries out the reaction beta-D-fructose 1,6-bisphosphate + H2O = beta-D-fructose 6-phosphate + phosphate. The sequence is that of Fructose-1,6-bisphosphatase, cytosolic from Oryza sativa subsp. indica (Rice).